We begin with the raw amino-acid sequence, 138 residues long: Acidic phospholipase A2 2 (138 aa).

Positions 1–16 are cleaved as a signal peptide; sequence MRTLWIVAVWLTGVEG. 7 cysteine pairs are disulfide-bonded: cysteine 42-cysteine 131, cysteine 44-cysteine 60, cysteine 59-cysteine 111, cysteine 65-cysteine 138, cysteine 66-cysteine 104, cysteine 73-cysteine 97, and cysteine 91-cysteine 102. Ca(2+) contacts are provided by tyrosine 43, glycine 45, and glycine 47. The active site involves histidine 63. Residue aspartate 64 coordinates Ca(2+). The active site involves aspartate 105.

As to quaternary structure, monomer. It depends on Ca(2+) as a cofactor. As to expression, expressed by the venom gland.

It localises to the secreted. The enzyme catalyses a 1,2-diacyl-sn-glycero-3-phosphocholine + H2O = a 1-acyl-sn-glycero-3-phosphocholine + a fatty acid + H(+). Its function is as follows. Snake venom phospholipase that inhibits ADP- and collagen-induced human platelet aggregation. This inhibition is completely inhibited by abolition of catalytic activity in case of collagen as inducer and partially inhibited in case of ADP as inducer. PLA2 catalyzes the calcium-dependent hydrolysis of the 2-acyl groups in 3-sn-phosphoglycerides. The sequence is that of Acidic phospholipase A2 2 from Macrovipera lebetinus (Levantine viper).